The chain runs to 712 residues: Ribosomal RNA large subunit methyltransferase K/L (712 aa).

The 112-residue stretch at 46–157 folds into the THUMP domain; sequence GAYQALLHSR…RENMVVSLDL (112 aa).

This sequence belongs to the methyltransferase superfamily. RlmKL family.

It is found in the cytoplasm. It carries out the reaction guanosine(2445) in 23S rRNA + S-adenosyl-L-methionine = N(2)-methylguanosine(2445) in 23S rRNA + S-adenosyl-L-homocysteine + H(+). The enzyme catalyses guanosine(2069) in 23S rRNA + S-adenosyl-L-methionine = N(2)-methylguanosine(2069) in 23S rRNA + S-adenosyl-L-homocysteine + H(+). Functionally, specifically methylates the guanine in position 2445 (m2G2445) and the guanine in position 2069 (m7G2069) of 23S rRNA. In Actinobacillus pleuropneumoniae serotype 5b (strain L20), this protein is Ribosomal RNA large subunit methyltransferase K/L.